The primary structure comprises 214 residues: Probable transaldolase (214 aa).

The active-site Schiff-base intermediate with substrate is lysine 83.

It belongs to the transaldolase family. Type 3B subfamily.

It localises to the cytoplasm. It carries out the reaction D-sedoheptulose 7-phosphate + D-glyceraldehyde 3-phosphate = D-erythrose 4-phosphate + beta-D-fructose 6-phosphate. Its pathway is carbohydrate degradation; pentose phosphate pathway; D-glyceraldehyde 3-phosphate and beta-D-fructose 6-phosphate from D-ribose 5-phosphate and D-xylulose 5-phosphate (non-oxidative stage): step 2/3. Transaldolase is important for the balance of metabolites in the pentose-phosphate pathway. The polypeptide is Probable transaldolase (Geobacter sulfurreducens (strain ATCC 51573 / DSM 12127 / PCA)).